The primary structure comprises 516 residues: MSIAWSCFVLGLFALASLQVALANDCAQKTFKTGIVCVCNITYCDEIPDINLLSGQAATFTTSKSGARLHRDVVYATNSDPLTSMHFTIDSSKTYQTIQGFGSTFSDASGANLKSLPDQMADTILRQYFSDSGLNLQFGRVPIASNDFSSRVYTYDDNLEDYNMAHFSLQREDYQWKIPYMQMAQKYNHDLKFFAVPWSAPGWLKTTNSTKGYGILLGTNQDTYHKSYVTYILHFLEEYQKNGILFWGLSTQNEPTSGSDKKTKMQSMGFTAEFQRDFIKLDIGPALKSSNAGKNVKILILDDNRGNLPKWADTVLNDKDAASYVSGIAVHSYQDDESDKHLTQTHNNHPDVFIFGTEASEGSKSKDVDYGSFDRAEDYVSDILDDFNNWVTGWTERNLVLDAQGGPSWVSGFADAPVIAFPALAQFYKQPMFYAIAHFSHFLKPGAVRIDHSLNMPNPEIERSAFLNPDGSKVVVLHNKNPLAPYSLSIKDTMKSTDHYQVHLSPKTIVTLYIQN.

An N-terminal signal peptide occupies residues 1–23 (MSIAWSCFVLGLFALASLQVALA). The Proton donor role is filled by glutamate 254. Glutamate 358 serves as the catalytic Nucleophile.

Belongs to the glycosyl hydrolase 30 family.

The catalysed reaction is a beta-D-glucosylceramide + H2O = an N-acyl-sphingoid base + D-glucose. It catalyses the reaction a beta-D-glucosyl-(1&lt;-&gt;1')-N-acylsphing-4-enine + H2O = an N-acylsphing-4-enine + D-glucose. The enzyme catalyses an N-acyl-1-beta-D-glucosyl-15-methylhexadecasphing-4-enine + H2O = an N-acyl-15-methylhexadecasphing-4-enine + D-glucose. The protein operates within lipid metabolism; sphingolipid metabolism. Functionally, glucosylceramidase that catalyzes the hydrolysis of glucosylceramides into free ceramides and glucose. C.elegans contain specific sphingoid bases, which are unique or different in structure compared to the sphingoid bases found in other animals. Two examples of these distinctive compounds are: 15-methylhexadecasphinganine and 15-methylhexadecasphing-4-enine. This Caenorhabditis elegans protein is Putative glucosylceramidase 2 (gba-2).